The chain runs to 182 residues: Troponin I, fast skeletal muscle (182 aa).

The residue at position 2 (Gly-2) is an N-acetylglycine. The interval 2–48 is involved in binding TNC; sequence GDEEKRNRAITARRQHLKSVMLQIAATELEKEEGRREAEKQNYLAEH. Residue Thr-12 is modified to Phosphothreonine; by PHK. Positions 97–117 are involved in binding TNC and actin; sequence NQKLFDLRGKFKRPPLRRVRM. The residue at position 118 (Ser-118) is a Phosphoserine; by PKA.

This sequence belongs to the troponin I family. In terms of assembly, binds to actin and tropomyosin.

In terms of biological role, troponin I is the inhibitory subunit of troponin, the thin filament regulatory complex which confers calcium-sensitivity to striated muscle actomyosin ATPase activity. The sequence is that of Troponin I, fast skeletal muscle (TNNI2) from Oryctolagus cuniculus (Rabbit).